The chain runs to 602 residues: uncharacterized protein (602 aa).

Belongs to the glycosyltransferase 2 family.

This is an uncharacterized protein from Rickettsia felis (strain ATCC VR-1525 / URRWXCal2) (Rickettsia azadi).